Here is a 709-residue protein sequence, read N- to C-terminus: Phosphoribosylformylglycinamidine synthase subunit PurL (709 aa).

H36 is a catalytic residue. Residues Y39 and K80 each coordinate ATP. Mg(2+) is bound at residue E82. Substrate contacts are provided by residues 83 to 86 and R105; that span reads SHNH. The Proton acceptor role is filled by H84. Residue D106 participates in Mg(2+) binding. Substrate is bound at residue Q226. D252 contacts Mg(2+). Residue 294–296 coordinates substrate; sequence ETQ. D470 and G507 together coordinate ATP. S510 is a substrate binding site.

It belongs to the FGAMS family. Monomer. Part of the FGAM synthase complex composed of 1 PurL, 1 PurQ and 2 PurS subunits.

Its subcellular location is the cytoplasm. It carries out the reaction N(2)-formyl-N(1)-(5-phospho-beta-D-ribosyl)glycinamide + L-glutamine + ATP + H2O = 2-formamido-N(1)-(5-O-phospho-beta-D-ribosyl)acetamidine + L-glutamate + ADP + phosphate + H(+). It participates in purine metabolism; IMP biosynthesis via de novo pathway; 5-amino-1-(5-phospho-D-ribosyl)imidazole from N(2)-formyl-N(1)-(5-phospho-D-ribosyl)glycinamide: step 1/2. Part of the phosphoribosylformylglycinamidine synthase complex involved in the purines biosynthetic pathway. Catalyzes the ATP-dependent conversion of formylglycinamide ribonucleotide (FGAR) and glutamine to yield formylglycinamidine ribonucleotide (FGAM) and glutamate. The FGAM synthase complex is composed of three subunits. PurQ produces an ammonia molecule by converting glutamine to glutamate. PurL transfers the ammonia molecule to FGAR to form FGAM in an ATP-dependent manner. PurS interacts with PurQ and PurL and is thought to assist in the transfer of the ammonia molecule from PurQ to PurL. This chain is Phosphoribosylformylglycinamidine synthase subunit PurL, found in Saccharolobus islandicus (strain Y.N.15.51 / Yellowstone #2) (Sulfolobus islandicus).